Reading from the N-terminus, the 353-residue chain is Photosystem II protein D1 (353 aa).

An N-acetylthreonine modification is found at Thr-2. Thr-2 is modified (phosphothreonine). 3 helical membrane passes run 29–46, 118–133, and 142–156; these read YIGW…TATS, HFLL…EWEL, and WIAV…AATA. His-118 contributes to the chlorophyll a binding site. Tyr-126 is a binding site for pheophytin a. Residues Asp-170 and Glu-189 each coordinate [CaMn4O5] cluster. The helical transmembrane segment at 197 to 218 threads the bilayer; the sequence is FHMLGVAGVFGGSLFSAMHGSL. His-198 contributes to the chlorophyll a binding site. A quinone is bound by residues His-215 and 264-265; that span reads SF. His-215 lines the Fe cation pocket. His-272 serves as a coordination point for Fe cation. Residues 274–288 traverse the membrane as a helical segment; that stretch reads FLAAWPVVGIWFTAL. [CaMn4O5] cluster-binding residues include His-332, Glu-333, Asp-342, and Ala-344. Positions 345–353 are excised as a propeptide; sequence AIDAPSING.

The protein belongs to the reaction center PufL/M/PsbA/D family. As to quaternary structure, PSII is composed of 1 copy each of membrane proteins PsbA, PsbB, PsbC, PsbD, PsbE, PsbF, PsbH, PsbI, PsbJ, PsbK, PsbL, PsbM, PsbT, PsbX, PsbY, PsbZ, Psb30/Ycf12, at least 3 peripheral proteins of the oxygen-evolving complex and a large number of cofactors. It forms dimeric complexes. The D1/D2 heterodimer binds P680, chlorophylls that are the primary electron donor of PSII, and subsequent electron acceptors. It shares a non-heme iron and each subunit binds pheophytin, quinone, additional chlorophylls, carotenoids and lipids. D1 provides most of the ligands for the Mn4-Ca-O5 cluster of the oxygen-evolving complex (OEC). There is also a Cl(-1) ion associated with D1 and D2, which is required for oxygen evolution. The PSII complex binds additional chlorophylls, carotenoids and specific lipids. serves as cofactor. In terms of processing, tyr-161 forms a radical intermediate that is referred to as redox-active TyrZ, YZ or Y-Z. Post-translationally, C-terminally processed by CTPA; processing is essential to allow assembly of the oxygen-evolving complex and thus photosynthetic growth.

Its subcellular location is the plastid. The protein resides in the chloroplast thylakoid membrane. The enzyme catalyses 2 a plastoquinone + 4 hnu + 2 H2O = 2 a plastoquinol + O2. Photosystem II (PSII) is a light-driven water:plastoquinone oxidoreductase that uses light energy to abstract electrons from H(2)O, generating O(2) and a proton gradient subsequently used for ATP formation. It consists of a core antenna complex that captures photons, and an electron transfer chain that converts photonic excitation into a charge separation. The D1/D2 (PsbA/PsbD) reaction center heterodimer binds P680, the primary electron donor of PSII as well as several subsequent electron acceptors. The protein is Photosystem II protein D1 of Glycine max (Soybean).